The primary structure comprises 553 residues: T-complex protein 1 subunit eta (553 aa).

Glycine 41 serves as a coordination point for ADP. Glycine 41 is an ATP binding site. Mg(2+) is bound at residue aspartate 92. ADP-binding residues include glycine 93, threonine 94, threonine 95, serine 96, serine 164, and serine 165. Glycine 93 contributes to the ATP binding site. Serine 96 contributes to the ATP binding site. Residues arginine 398 and glycine 409 each coordinate ATP. Residues glycine 409, glutamate 494, and arginine 499 each coordinate ADP. Position 499 (arginine 499) interacts with ATP. The disordered stretch occupies residues 523-553 (PRSTVDAPPGGRGRGRGQTPQPLRPRSVALS). Over residues 539–553 (GQTPQPLRPRSVALS) the composition is skewed to low complexity.

As to quaternary structure, component of the chaperonin-containing T-complex (TRiC), a hexadecamer composed of two identical back-to-back stacked rings enclosing a protein folding chamber. Each ring is made up of eight different subunits: TCP1/CCT1, CCT2, CCT3, CCT4, CCT5, CCT6A/CCT6, CCT7, CCT8.

It is found in the cytoplasm. The catalysed reaction is ATP + H2O = ADP + phosphate + H(+). In terms of biological role, component of the chaperonin-containing T-complex (TRiC), a molecular chaperone complex that assists the folding of actin, tubulin and other proteins upon ATP hydrolysis. This is T-complex protein 1 subunit eta from Gallus gallus (Chicken).